The sequence spans 1344 residues: Centrosomal P4.1-associated protein (1344 aa).

Disordered stretches follow at residues 67–123 (SSEE…NNDL) and 187–225 (PGTLLPDDQSQKHRSPGDLTLPPHSYSNPTQENSCASNV). Positions 211-225 (SYSNPTQENSCASNV) are enriched in polar residues. Ser248 is modified (phosphoserine). Residues 257–300 (QEAHVKRNDLKEESPAHPSGEGALPRWEKKMGRSQEGKDVNLQK) are disordered. 2 stretches are compositionally biased toward basic and acidic residues: residues 259–271 (AHVKRNDLKEESP) and 282–297 (RWEKKMGRSQEGKDVN). Ser304 carries the post-translational modification Phosphoserine. The interval 307 to 382 (VVNIDERPIK…FTNAKSKFQK (76 aa)) is alpha/beta-tubulin binding. 2 disordered regions span residues 347 to 407 (QEAE…DRQH) and 425 to 470 (TVKK…KKRD). A compositionally biased stretch (polar residues) spans 388–398 (LASTQSPSEDQ). Position 528 is a phosphoserine (Ser528). Phosphoserine; by PLK2 is present on residues Ser577 and Ser583. 2 disordered regions span residues 600–626 (RLSSTPVKAVQQREAQQADPRGQSNCS) and 672–735 (TSEI…DTGA). Basic and acidic residues predominate over residues 709–720 (VGDRVFSNREDS). Ser748 carries the post-translational modification Phosphoserine. Positions 887-1344 (QPPEFMVCFI…DGNVLMDTEM (458 aa)) are interaction with STIL. Residues 1105-1133 (QGNLSRRIKSAPPRDLGSSDKGQAALPRE) are disordered.

It belongs to the TCP10 family. In terms of assembly, forms homodimers. Associates with microtubules plus ends; binds to beta-tubulin subunits exposed on microtubule outer surface at its distal tip; also associates with microtubule lattice. Associated with the gamma-tubulin complex. Interacts with the head domain of EPB41. Interacts with LYST. Interacts with CEP152 (via C-terminus). Interacts with STIL. Forms a complex with STIL and SASS6. Post-translationally, phosphorylation at Ser-577 and Ser-583 by PLK2 is required for procentriole formation and centriole elongation. Phosphorylation by PLK2 oscillates during the cell cycle: it increases at G1/S transition and decreases during the exit from mitosis. Phosphorylation at Ser-583 is also mediated by PLK4 but is not a critical step in PLK4 function in procentriole assembly.

The protein localises to the cytoplasm. It is found in the cytoskeleton. It localises to the microtubule organizing center. The protein resides in the centrosome. Its subcellular location is the centriole. Plays an important role in cell division and centrosome function by participating in centriole duplication. Inhibits microtubule nucleation from the centrosome. Involved in the regulation of slow processive growth of centriolar microtubules. Acts as microtubule plus-end tracking protein that stabilizes centriolar microtubules and inhibits microtubule polymerization and extension from the distal ends of centrioles. Required for centriole elongation and for STIL-mediated centriole amplification. Required for the recruitment of CEP295 to the proximal end of new-born centrioles at the centriolar microtubule wall during early S phase in a PLK4-dependent manner. May be involved in the control of centriolar-microtubule growth by acting as a regulator of tubulin release. This is Centrosomal P4.1-associated protein (Cpap) from Mus musculus (Mouse).